The chain runs to 544 residues: Transcription factor bHLH119 (544 aa).

Disordered stretches follow at residues 12 to 59 (NGQV…QPPR) and 185 to 208 (VAST…PPSV). Residues 15-29 (VVRTSQPQRPSSGKP) show a composition bias toward polar residues. The segment covering 50 to 59 (LPLPLLQPPR) has biased composition (pro residues). T269 is subject to Phosphothreonine. Phosphoserine is present on S274. Disordered regions lie at residues 342 to 364 (QGTE…MHNL) and 522 to 544 (QPPL…STSK). Positions 357 to 406 (RAADMHNLSERRRRERINERMKTLQELLPRCRKTDKVSMLEDVIEYVKSL) constitute a bHLH domain. Residues 522–535 (QPPLPLQGQPTSQP) are compositionally biased toward low complexity. A phosphoserine mark is found at S541 and S543.

Homodimer.

Its subcellular location is the nucleus. This Arabidopsis thaliana (Mouse-ear cress) protein is Transcription factor bHLH119 (BHLH119).